A 202-amino-acid chain; its full sequence is Transmembrane 4 L6 family member 4 (202 aa).

Topologically, residues 1–9 (MCTGGCARC) are cytoplasmic. The chain crosses the membrane as a helical span at residues 10–30 (LGGTLIPLAVFAVLANILLFF). Topologically, residues 31 to 48 (PGGKVVDDNSHLSDEVWY) are extracellular. Residues 49-69 (FGGILGSGVLMIFPALVFLGL) form a helical membrane-spanning segment. Residues 70–93 (QNNDCCGCCGNESCGKRFAMFTST) are Cytoplasmic-facing. Residues 94–114 (LFAVVGFLGAAYSFIVSAVSI) traverse the membrane as a helical segment. At 115 to 158 (NKGPKCFMTNNTWGYPFHDGDYLNDQALWSKCEEPRDVVPWNLT) the chain is on the extracellular side. Asn156 carries an N-linked (GlcNAc...) asparagine glycan. The chain crosses the membrane as a helical span at residues 159-179 (LFSILLVIGGIQMVLCAIQVI). Residues 180-202 (NGLLGTLCGDCQCCGCCGGDRPV) lie on the Cytoplasmic side of the membrane.

This sequence belongs to the L6 tetraspanin family. In terms of tissue distribution, expressed in liver and testis. Up-regulated in regenerating liver after partial hepatectomy.

The protein resides in the membrane. Regulates the adhesive and proliferative status of intestinal epithelial cells. Can mediate density-dependent cell proliferation. In Rattus norvegicus (Rat), this protein is Transmembrane 4 L6 family member 4 (Tm4sf4).